Reading from the N-terminus, the 1204-residue chain is Major DNA-binding protein (1204 aa).

Positions 289–314 are disordered; sequence SGTTTARGARRNDVNSTSKPSPSGGF. A zinc finger spans residues 497 to 510; it reads CSLCEKHTRPVCAH. 2 short sequence motifs (required for filament formation) span residues 841–842 and 1146–1148; these read FW and FNF. The required for nuclear localization stretch occupies residues 1177–1204; it reads LKRPPEDDELFDLSGIPIKHGNITMEMI.

This sequence belongs to the herpesviridae major DNA-binding protein family. In terms of assembly, homooligomers. Forms double-helical filaments necessary for the formation of replication compartments within the host nucleus. Interacts with the origin-binding protein. Interacts with the helicase primase complex; this interaction stimulates primer synthesis activity of the helicase-primase complex. Interacts with the DNA polymerase. Interacts with the alkaline exonuclease; this interaction increases its nuclease processivity.

The protein resides in the host nucleus. Plays several crucial roles in viral infection. Participates in the opening of the viral DNA origin to initiate replication by interacting with the origin-binding protein. May disrupt loops, hairpins and other secondary structures present on ssDNA to reduce and eliminate pausing of viral DNA polymerase at specific sites during elongation. Promotes viral DNA recombination by performing strand-transfer, characterized by the ability to transfer a DNA strand from a linear duplex to a complementary single-stranded DNA circle. Can also catalyze the renaturation of complementary single strands. Additionally, reorganizes the host cell nucleus, leading to the formation of prereplicative sites and replication compartments. This process is driven by the protein which can form double-helical filaments in the absence of DNA. This Homo sapiens (Human) protein is Major DNA-binding protein.